The sequence spans 327 residues: DNA-directed RNA polymerase subunit alpha (327 aa).

Positions 1–233 are alpha N-terminal domain (alpha-NTD); that stretch reads MVREKVKVST…NLFIPFLHVE (233 aa). The tract at residues 265-327 is alpha C-terminal domain (alpha-CTD); sequence KELAFQYIFI…KKILDILEKK (63 aa).

Belongs to the RNA polymerase alpha chain family. As to quaternary structure, in plastids the minimal PEP RNA polymerase catalytic core is composed of four subunits: alpha, beta, beta', and beta''. When a (nuclear-encoded) sigma factor is associated with the core the holoenzyme is formed, which can initiate transcription.

The protein resides in the plastid. It localises to the chloroplast. The catalysed reaction is RNA(n) + a ribonucleoside 5'-triphosphate = RNA(n+1) + diphosphate. Its function is as follows. DNA-dependent RNA polymerase catalyzes the transcription of DNA into RNA using the four ribonucleoside triphosphates as substrates. This is DNA-directed RNA polymerase subunit alpha from Olimarabidopsis pumila (Dwarf rocket).